The following is a 498-amino-acid chain: MEEDKILTETLLSAAEEPPALPFSSVEDIPPITTVGGFVKEFNVEVKKLWYLAGPAIFMSITQYSLGAATQVFAGHISTIALAAVSVENSVIAGFSFGVMLGMGSALETLCGQAFGAGKLSMLGVYLQRSWVILNVTAVILSLLYIFAAPILAFIGQTPAISSATGIFSIYMIPQIFAYAVNYPTAKFLQSQSKIMVMAAISAVALVLHVLLTWFVIEGLQWGTAGLAVVLNASWWFIVVAQLVYIFSGTCGEAWSGFSWEAFHNLWSFVRLSLASAVMLCLEVWYLMAVILFAGYLKNAEISVAALSICMNILGWTAMIAIGMNAAVSVRVSNELGAKHPRTAKFSLLVAVITSTVIGLAISIALLIFRDKYPSLFVGDEEVIIVVKDLTPILAVSIVINNVQPVLSGVAVGAGWQAVVAYVNIVCYYVFGIPFGLLLGYKLNFGVMGIWCGMLTGTVVQTIVLTWMICRTNWDTEAAMAEGRIREWGGEVSDQLLN.

Helical transmembrane passes span Tyr-64–Ser-86, Val-91–Cys-111, Val-136–Gly-156, Ile-161–Val-181, Val-197–Ile-217, Leu-227–Phe-247, Ala-277–Leu-297, Ile-302–Ile-322, Leu-349–Phe-369, Ile-393–Gly-413, Val-419–Leu-439, and Val-447–Trp-467.

Belongs to the multi antimicrobial extrusion (MATE) (TC 2.A.66.1) family.

The protein resides in the membrane. This is Protein DETOXIFICATION 30 from Arabidopsis thaliana (Mouse-ear cress).